Reading from the N-terminus, the 139-residue chain is Immunogenic miracidial antigen 8I (139 aa).

The disordered stretch occupies residues 61 to 139 (IDVGDEDYHD…PKKYGSGYKH (79 aa)). The segment covering 64 to 85 (GDEDYHDGDDDVDYTDDVDDVD) has biased composition (acidic residues). Over residues 90 to 103 (SPSQLLQGGYQRNQ) the composition is skewed to polar residues.

The protein belongs to the immunogenic miracidial antigen family.

This is Immunogenic miracidial antigen 8I (8I) from Schistosoma japonicum (Blood fluke).